Here is an 82-residue protein sequence, read N- to C-terminus: uncharacterized protein (82 aa).

Belongs to the chlamydial CPn_0710/CT_666/TC_0037 family.

This is an uncharacterized protein from Chlamydia muridarum (strain MoPn / Nigg).